Reading from the N-terminus, the 252-residue chain is DNA-directed RNA polymerase III subunit rpc8 (252 aa).

Residues 214–252 form a disordered region; that stretch reads WTNQSAGDDDENEEDGGENQDDEVAEDDGGEEPTIEEDE. Acidic residues predominate over residues 220 to 252; that stretch reads GDDDENEEDGGENQDDEVAEDDGGEEPTIEEDE.

The protein belongs to the eukaryotic RPB7/RPC8 RNA polymerase subunit family. In terms of assembly, component of the RNA polymerase III (Pol III) complex consisting of several subunits.

It localises to the nucleus. In terms of biological role, DNA-dependent RNA polymerase catalyzes the transcription of DNA into RNA using the four ribonucleoside triphosphates as substrates. The polypeptide is DNA-directed RNA polymerase III subunit rpc8 (polr3h-1) (Dictyostelium discoideum (Social amoeba)).